The chain runs to 255 residues: Pimeloyl-[acyl-carrier protein] methyl ester esterase (255 aa).

The AB hydrolase-1 domain occupies 16–242; the sequence is LVLLHGWGMN…SSHAPFITEP (227 aa). Residues tryptophan 22, 82-83, and 143-147 each bind substrate; these read SL and FMALQ. Serine 82 functions as the Nucleophile in the catalytic mechanism. Catalysis depends on residues aspartate 207 and histidine 235. Residue histidine 235 coordinates substrate.

It belongs to the AB hydrolase superfamily. Carboxylesterase BioH family. As to quaternary structure, monomer.

Its subcellular location is the cytoplasm. It catalyses the reaction 6-carboxyhexanoyl-[ACP] methyl ester + H2O = 6-carboxyhexanoyl-[ACP] + methanol + H(+). Its pathway is cofactor biosynthesis; biotin biosynthesis. The physiological role of BioH is to remove the methyl group introduced by BioC when the pimeloyl moiety is complete. It allows to synthesize pimeloyl-ACP via the fatty acid synthetic pathway through the hydrolysis of the ester bonds of pimeloyl-ACP esters. The protein is Pimeloyl-[acyl-carrier protein] methyl ester esterase of Vibrio vulnificus (strain CMCP6).